The following is a 557-amino-acid chain: Dihydroxy-acid dehydratase (557 aa).

A Mg(2+)-binding site is contributed by D78. [2Fe-2S] cluster is bound at residue C119. Residues D120 and K121 each contribute to the Mg(2+) site. An N6-carboxylysine modification is found at K121. C192 serves as a coordination point for [2Fe-2S] cluster. Residue E443 participates in Mg(2+) binding. S469 serves as the catalytic Proton acceptor.

It belongs to the IlvD/Edd family. In terms of assembly, homodimer. It depends on [2Fe-2S] cluster as a cofactor. Mg(2+) is required as a cofactor.

It catalyses the reaction (2R)-2,3-dihydroxy-3-methylbutanoate = 3-methyl-2-oxobutanoate + H2O. The catalysed reaction is (2R,3R)-2,3-dihydroxy-3-methylpentanoate = (S)-3-methyl-2-oxopentanoate + H2O. It functions in the pathway amino-acid biosynthesis; L-isoleucine biosynthesis; L-isoleucine from 2-oxobutanoate: step 3/4. Its pathway is amino-acid biosynthesis; L-valine biosynthesis; L-valine from pyruvate: step 3/4. In terms of biological role, functions in the biosynthesis of branched-chain amino acids. Catalyzes the dehydration of (2R,3R)-2,3-dihydroxy-3-methylpentanoate (2,3-dihydroxy-3-methylvalerate) into 2-oxo-3-methylpentanoate (2-oxo-3-methylvalerate) and of (2R)-2,3-dihydroxy-3-methylbutanoate (2,3-dihydroxyisovalerate) into 2-oxo-3-methylbutanoate (2-oxoisovalerate), the penultimate precursor to L-isoleucine and L-valine, respectively. The sequence is that of Dihydroxy-acid dehydratase from Persephonella marina (strain DSM 14350 / EX-H1).